The chain runs to 4857 residues: Dual E2 ubiquitin-conjugating enzyme/E3 ubiquitin-protein ligase BIRC6 (4857 aa).

WD repeat units lie at residues 68-106 (DGLHSLSYHPALNAILAVTSRGTIKVIDGTSGATLQASA) and 107-136 (LSAKPGGQVKCQYISAVDKVIFVDDYAVGC). Residues 268-377 (PELGVGPGRS…LSVTLATSPA (110 aa)) form a BIR repeat. Residues C328, C331, H348, and C355 each contribute to the Zn(2+) site. A WD 3 repeat occupies 379 to 426 (FPCTDGTDRISCFGSGSCPHFLAAATKRGKICIWDVSKLMKVHLKFEI). 2 disordered regions span residues 465–498 (DIPKLEGDSDDLLEDSDSEEHSRSDSVTGHTSQK) and 579–618 (ATSPISSNSHRSLDGLSRTQGESISEQGSTDNESCTNSEL). A compositionally biased stretch (acidic residues) spans 472-482 (DSDDLLEDSDS). Residues S473, S480, S482, S581, and S590 each carry the phosphoserine modification. WD repeat units lie at residues 501–720 (MEVS…VQCL), 730–850 (NLCI…QHIK), 851–927 (DPQD…AKVE), and 928–966 (PPKKEGTEEQDTFVSVIYCSGTDRLCACTKGGELHFLQI). Positions 579–588 (ATSPISSNSH) are enriched in polar residues. A compositionally biased stretch (polar residues) spans 595-618 (SRTQGESISEQGSTDNESCTNSEL). Disordered regions lie at residues 984–1004 (LSKGIEPSSEGSKPLSNPSSP) and 1053–1073 (QQQRRHPQHLHQQHHGDAAQH). The span at 992–1004 (SEGSKPLSNPSSP) shows a compositional bias: polar residues. Residues 1056–1065 (RRHPQHLHQQ) show a composition bias toward basic residues. T1710 is subject to Phosphothreonine. 2 positions are modified to phosphoserine: S2222 and S2955. Positions 2945–2973 (SVTTNTTDSVSDEEKVSGGKDGNGSSTSV) are disordered. The tract at residues 3189-3193 (HRRAR) is HRRAR loop; important for DIABLO/SMAC and HTRA2 binding. The region spanning 3819 to 4068 (DEKVTMFLQS…ESLLETCPIQ (250 aa)) is the Ubiquitin-like domain. The interval 3923–3949 (QSKRAVSATPPRPPSRRGRTIPDKIGS) is disordered. Phosphothreonine is present on T3931. Phosphoserine is present on S4023. A disordered region spans residues 4260–4283 (RVPNSSVNQTEPQVSSSHNPTSTE). The segment covering 4261–4283 (VPNSSVNQTEPQVSSSHNPTSTE) has biased composition (polar residues). Residues 4573-4740 (ARARRLAQEA…IRQATVKWAM (168 aa)) enclose the UBC core domain. C4666 (glycyl thioester intermediate) is an active-site residue. The interval 4835–4857 (EETLMHDQVKPSSSKELPSDFQL) is disordered. Residues 4844 to 4857 (KPSSSKELPSDFQL) show a composition bias toward polar residues.

This sequence belongs to the BIRC6 family. Homodimer; antiparallel. Interacts with RNF41. Interacts with DIABLO/SMAC, likely with higher affinity to SMAC dimer than SMAC monomer; this interaction blocks the substrate-binding site and inhibits the caspase inhibition activity of BIRC6. Interacts with KIF23/MKLP1, USP8/UBPY, BIRC5/survivin, MAP2K1/MEK1, RAB8A/RAB8, RAB11A/RAB11, PLK1, EXOC3/SEC6 and EXOC4/SEC8. Ubiquitinated; mediated by RNF41 E3 ligase and leads to proteasomal degradation, impairing inhibition of apoptosis. Deubiquitinated by USP8/UBPY. Autoubiquitinated; mediated by E1 ubiquitin activating enzyme UBA6. In terms of processing, proteolytically cleaved. Acts as substrate for CASP3, CASP6, CASP7, CASP9 and HTRA2. Expressed in brain cancer cells.

Its subcellular location is the golgi apparatus. It localises to the trans-Golgi network membrane. The protein localises to the endosome. It is found in the cytoplasm. The protein resides in the cytoskeleton. Its subcellular location is the spindle pole. It localises to the microtubule organizing center. The protein localises to the centrosome. It is found in the midbody. The protein resides in the midbody ring. It catalyses the reaction S-ubiquitinyl-[E1 ubiquitin-activating enzyme]-L-cysteine + [acceptor protein]-L-lysine = [E1 ubiquitin-activating enzyme]-L-cysteine + N(6)-monoubiquitinyl-[acceptor protein]-L-lysine.. With respect to regulation, inhibited by DIABLO/SMAC, which competes for the substrate-binding sites on BIRC6. BIRC6 inhibits caspases and protease by ubiquitination but BIRC6 itself is subjected to protease cleavage by CASP3, CASP6, CASP7, CASP9 and HTRA2 by protease cleavage. Its function is as follows. Anti-apoptotic protein known as inhibitor of apoptosis (IAP) which can regulate cell death by controlling caspases and by acting as an E3 ubiquitin-protein ligase. Unlike most IAPs, does not contain a RING domain and it is not a RING-type E3 ligase. Instead acts as a dual E2/E3 enzyme that combines ubiquitin conjugating (E2) and ubiquitin ligase (E3) activities in a single polypeptide. Ubiquitination is mediated by a non-canonical E1 ubiquitin activating enzyme UBA6. Ubiquitinates CASP3, CASP7 and CASP9 and inhibits their caspase activity; also ubiquitinates their procaspases but to a weaker extent. Ubiquitinates pro-apoptotic factors DIABLO/SMAC and HTRA2. DIABLO/SMAC antagonizes the caspase inhibition activity of BIRC6 by competing for the same binding sites as the caspases. Ubiquitinates the autophagy protein MAP1LC3B; this activity is also inhibited by DIABLO/SMAC. Important regulator for the final stages of cytokinesis. Crucial for normal vesicle targeting to the site of abscission, but also for the integrity of the midbody and the midbody ring, and its striking ubiquitin modification. This Homo sapiens (Human) protein is Dual E2 ubiquitin-conjugating enzyme/E3 ubiquitin-protein ligase BIRC6 (BIRC6).